The following is a 106-amino-acid chain: Large ribosomal subunit protein uL24 (106 aa).

Residues 84 to 97 (EKIGRELGAKEKAR) show a composition bias toward basic and acidic residues. Residues 84–106 (EKIGRELGAKEKARLQKRKAAAK) form a disordered region.

Belongs to the universal ribosomal protein uL24 family. Part of the 50S ribosomal subunit.

In terms of biological role, one of two assembly initiator proteins, it binds directly to the 5'-end of the 23S rRNA, where it nucleates assembly of the 50S subunit. Functionally, one of the proteins that surrounds the polypeptide exit tunnel on the outside of the subunit. The chain is Large ribosomal subunit protein uL24 from Anaeromyxobacter sp. (strain K).